A 393-amino-acid chain; its full sequence is Acetyl-CoA acetyltransferase (393 aa).

The Acyl-thioester intermediate role is filled by cysteine 90. Active-site proton acceptor residues include histidine 349 and cysteine 379.

Belongs to the thiolase-like superfamily. Thiolase family. In terms of assembly, homotetramer.

The protein localises to the cytoplasm. The catalysed reaction is 2 acetyl-CoA = acetoacetyl-CoA + CoA. Its pathway is biopolymer metabolism; poly-(R)-3-hydroxybutanoate biosynthesis. The protein operates within metabolic intermediate biosynthesis; (R)-mevalonate biosynthesis; (R)-mevalonate from acetyl-CoA: step 1/3. The protein is Acetyl-CoA acetyltransferase of Rhizobium meliloti (strain 1021) (Ensifer meliloti).